The chain runs to 431 residues: Glutamate-1-semialdehyde 2,1-aminomutase (431 aa).

N6-(pyridoxal phosphate)lysine is present on Lys-269.

This sequence belongs to the class-III pyridoxal-phosphate-dependent aminotransferase family. HemL subfamily. Homodimer. Requires pyridoxal 5'-phosphate as cofactor.

The protein localises to the cytoplasm. The enzyme catalyses (S)-4-amino-5-oxopentanoate = 5-aminolevulinate. Its pathway is porphyrin-containing compound metabolism; protoporphyrin-IX biosynthesis; 5-aminolevulinate from L-glutamyl-tRNA(Glu): step 2/2. The sequence is that of Glutamate-1-semialdehyde 2,1-aminomutase from Francisella tularensis subsp. holarctica (strain LVS).